We begin with the raw amino-acid sequence, 172 residues long: NAD(P)H-quinone oxidoreductase subunit I, chloroplastic (172 aa).

4Fe-4S ferredoxin-type domains lie at Gly-55 to Lys-84 and Leu-95 to Glu-124. [4Fe-4S] cluster-binding residues include Cys-64, Cys-67, Cys-70, Cys-74, Cys-104, Cys-107, Cys-110, and Cys-114.

It belongs to the complex I 23 kDa subunit family. NDH is composed of at least 16 different subunits, 5 of which are encoded in the nucleus. [4Fe-4S] cluster is required as a cofactor.

The protein localises to the plastid. The protein resides in the chloroplast thylakoid membrane. The catalysed reaction is a plastoquinone + NADH + (n+1) H(+)(in) = a plastoquinol + NAD(+) + n H(+)(out). The enzyme catalyses a plastoquinone + NADPH + (n+1) H(+)(in) = a plastoquinol + NADP(+) + n H(+)(out). Functionally, NDH shuttles electrons from NAD(P)H:plastoquinone, via FMN and iron-sulfur (Fe-S) centers, to quinones in the photosynthetic chain and possibly in a chloroplast respiratory chain. The immediate electron acceptor for the enzyme in this species is believed to be plastoquinone. Couples the redox reaction to proton translocation, and thus conserves the redox energy in a proton gradient. The sequence is that of NAD(P)H-quinone oxidoreductase subunit I, chloroplastic from Olimarabidopsis pumila (Dwarf rocket).